Reading from the N-terminus, the 141-residue chain is MAKKVANIVKLQIPAGKATPAPPVGPALGQAGINIMGFTKDFNARTADQAGLLIPVVITVYEDRSFDFVTKTPPAAVLLKKAAGVQKGSGEPNTKKVATVTKAQVQEIAETKMQDLNAADVEAAMRMVEGTARSMGFTVEG.

It belongs to the universal ribosomal protein uL11 family. Part of the ribosomal stalk of the 50S ribosomal subunit. Interacts with L10 and the large rRNA to form the base of the stalk. L10 forms an elongated spine to which L12 dimers bind in a sequential fashion forming a multimeric L10(L12)X complex. In terms of processing, one or more lysine residues are methylated.

Its function is as follows. Forms part of the ribosomal stalk which helps the ribosome interact with GTP-bound translation factors. This chain is Large ribosomal subunit protein uL11, found in Latilactobacillus sakei subsp. sakei (strain 23K) (Lactobacillus sakei subsp. sakei).